The following is a 186-amino-acid chain: MNILSLSECVDRLRKNLVIAYPTESVLGLGCNPESIDAVKVLLKLKKRKLNKGFILVASHFNQIRSYISESKLSIYHKKILYSSWPDTITYLLPAKSFVPDWLTGRSNFLGIRISAHNGINKLCSAFGKAIISTSANISGRNPCRTYEEFLKQFGTTVPILCGPLGTRKNPSKILNIINGSLIRHG.

The YrdC-like domain maps to 3–186 (ILSLSECVDR…IINGSLIRHG (184 aa)).

Belongs to the SUA5 family. TsaC subfamily.

Its subcellular location is the cytoplasm. The enzyme catalyses L-threonine + hydrogencarbonate + ATP = L-threonylcarbamoyladenylate + diphosphate + H2O. Functionally, required for the formation of a threonylcarbamoyl group on adenosine at position 37 (t(6)A37) in tRNAs that read codons beginning with adenine. Catalyzes the conversion of L-threonine, HCO(3)(-)/CO(2) and ATP to give threonylcarbamoyl-AMP (TC-AMP) as the acyladenylate intermediate, with the release of diphosphate. This chain is Threonylcarbamoyl-AMP synthase, found in Buchnera aphidicola subsp. Baizongia pistaciae (strain Bp).